A 94-amino-acid polypeptide reads, in one-letter code: MTKSELIERLAGQQSHISAKTVEDAVKEILDHMAITLADGERIEVRGFGSFSLHYRAPRVGRNPKTGDKVELEGKYVPHFKPGKELRDRVNIYD.

Belongs to the bacterial histone-like protein family. Heterodimer of an alpha and a beta chain.

This protein is one of the two subunits of integration host factor, a specific DNA-binding protein that functions in genetic recombination as well as in transcriptional and translational control. This chain is Integration host factor subunit beta, found in Photorhabdus laumondii subsp. laumondii (strain DSM 15139 / CIP 105565 / TT01) (Photorhabdus luminescens subsp. laumondii).